A 554-amino-acid chain; its full sequence is MVNASVTGIGSMESARRVVEALIRGGVQHVVVSPGSRNAPLVYALAEAQQAIHVVVRIDERSAGFTALGLAIGSSSPVAVLTTSGTAVGNLLPAVMEADHAGVPLLVLSADRPEELRGTGANQTTDQIDLFGSHVRFAADVAAGDLPEPAVRTGLDAALGRLDGVATGPVQLNFAFRDPLTPALDGSDFRPLKSSQPVDAAIETIIPQHQESEHRYQTVVLAGHGAGPQAELFARRHGLPLLAEPSSNARFGPNAVGPYRLLLEHFEALIERVVIFGRPTLSRPVAALMNRADLPRALYLPRPATWFEEGKRSEQIISDWAALSEFTGSGSASWLEIWLAAQIQAEAALDDALGEELSGLRLARELWGSSENLVIGSSNPIRDADLAGRPRSESPRVHANRGLAGIDGTISTATGIALATARPTRLLVGDLTFLHDVGGLLLPRGEQVPDLQIVVLNDSGGGIFTLLEHGTLGDEPAYQAAVERYFGTAHDAELASLAAAYGLEYQLVSSTEQLVEMLQAPVSGRSVLEIRTERTALRGLHDRVRAAISAALTI.

This sequence belongs to the TPP enzyme family. MenD subfamily. Homodimer. The cofactor is Mg(2+). It depends on Mn(2+) as a cofactor. Thiamine diphosphate is required as a cofactor.

The enzyme catalyses isochorismate + 2-oxoglutarate + H(+) = 5-enolpyruvoyl-6-hydroxy-2-succinyl-cyclohex-3-ene-1-carboxylate + CO2. It participates in quinol/quinone metabolism; 1,4-dihydroxy-2-naphthoate biosynthesis; 1,4-dihydroxy-2-naphthoate from chorismate: step 2/7. It functions in the pathway quinol/quinone metabolism; menaquinone biosynthesis. In terms of biological role, catalyzes the thiamine diphosphate-dependent decarboxylation of 2-oxoglutarate and the subsequent addition of the resulting succinic semialdehyde-thiamine pyrophosphate anion to isochorismate to yield 2-succinyl-5-enolpyruvyl-6-hydroxy-3-cyclohexene-1-carboxylate (SEPHCHC). The chain is 2-succinyl-5-enolpyruvyl-6-hydroxy-3-cyclohexene-1-carboxylate synthase from Renibacterium salmoninarum (strain ATCC 33209 / DSM 20767 / JCM 11484 / NBRC 15589 / NCIMB 2235).